Reading from the N-terminus, the 127-residue chain is UPF0325 protein VC_2264 (127 aa).

It belongs to the UPF0325 family.

This chain is UPF0325 protein VC_2264, found in Vibrio cholerae serotype O1 (strain ATCC 39315 / El Tor Inaba N16961).